The chain runs to 157 residues: uncharacterized protein (157 aa).

4 helical membrane-spanning segments follow: residues 29 to 49, 52 to 72, 93 to 113, and 117 to 137; these read LLII…PAYF, VLHV…GFGI, LGSV…RTWL, and NEMF…TITA.

Its subcellular location is the cell membrane. This is an uncharacterized protein from Bacillus subtilis (strain 168).